A 334-amino-acid chain; its full sequence is Proline-serine-threonine phosphatase-interacting protein 2 (334 aa).

An F-BAR domain is found at S4–D264. A coiled-coil region spans residues G66 to N163. A disordered region spans residues Y288–D322. A phosphotyrosine mark is found at Y323 and Y329.

Post-translationally, phosphorylated on tyrosine. As to expression, expressed in macrophage-containing tissues, including bone marrow, spleen, liver, kidney, intestine and brain.

It localises to the cytoplasm. It is found in the membrane. Binds to F-actin. May be involved in regulation of the actin cytoskeleton. In Mus musculus (Mouse), this protein is Proline-serine-threonine phosphatase-interacting protein 2 (Pstpip2).